The following is a 215-amino-acid chain: Cytochrome c biogenesis ATP-binding export protein CcmA (215 aa).

Positions 3-211 (LTAEILAARR…KMTGFAGVDN (209 aa)) constitute an ABC transporter domain. Residue 35 to 42 (GKNGSGKS) participates in ATP binding.

Belongs to the ABC transporter superfamily. CcmA exporter (TC 3.A.1.107) family. The complex is composed of two ATP-binding proteins (CcmA) and two transmembrane proteins (CcmB).

The protein resides in the cell inner membrane. The catalysed reaction is heme b(in) + ATP + H2O = heme b(out) + ADP + phosphate + H(+). Functionally, part of the ABC transporter complex CcmAB involved in the biogenesis of c-type cytochromes; once thought to export heme, this seems not to be the case, but its exact role is uncertain. Responsible for energy coupling to the transport system. The polypeptide is Cytochrome c biogenesis ATP-binding export protein CcmA (Rhizobium johnstonii (strain DSM 114642 / LMG 32736 / 3841) (Rhizobium leguminosarum bv. viciae)).